Reading from the N-terminus, the 305-residue chain is tRNA dimethylallyltransferase (305 aa).

Residue 9–16 (GPTGAGKT) coordinates ATP. 11–16 (TGAGKT) provides a ligand contact to substrate. 2 interaction with substrate tRNA regions span residues 34–37 (DSRQ) and 158–162 (QRIVR).

It belongs to the IPP transferase family. As to quaternary structure, monomer. It depends on Mg(2+) as a cofactor.

The catalysed reaction is adenosine(37) in tRNA + dimethylallyl diphosphate = N(6)-dimethylallyladenosine(37) in tRNA + diphosphate. In terms of biological role, catalyzes the transfer of a dimethylallyl group onto the adenine at position 37 in tRNAs that read codons beginning with uridine, leading to the formation of N6-(dimethylallyl)adenosine (i(6)A). This chain is tRNA dimethylallyltransferase, found in Oleidesulfovibrio alaskensis (strain ATCC BAA-1058 / DSM 17464 / G20) (Desulfovibrio alaskensis).